A 127-amino-acid chain; its full sequence is Small ribosomal subunit protein uS11 (127 aa).

Belongs to the universal ribosomal protein uS11 family. In terms of assembly, part of the 30S ribosomal subunit.

Located on the platform of the 30S subunit. This Halobacterium salinarum (strain ATCC 700922 / JCM 11081 / NRC-1) (Halobacterium halobium) protein is Small ribosomal subunit protein uS11.